Consider the following 456-residue polypeptide: CCA-adding enzyme (456 aa).

Residues Ser53 and Lys56 each contribute to the ATP site. CTP is bound by residues Ser53 and Lys56. Residues Asp65, Asp67, and Asp119 each contribute to the Mg(2+) site. ATP contacts are provided by His142, Lys161, and Tyr170. CTP-binding residues include His142, Lys161, and Tyr170.

Belongs to the tRNA nucleotidyltransferase/poly(A) polymerase family. Archaeal CCA-adding enzyme subfamily. As to quaternary structure, homodimer. Mg(2+) serves as cofactor.

The enzyme catalyses a tRNA precursor + 2 CTP + ATP = a tRNA with a 3' CCA end + 3 diphosphate. It catalyses the reaction a tRNA with a 3' CCA end + 2 CTP + ATP = a tRNA with a 3' CCACCA end + 3 diphosphate. Functionally, catalyzes the addition and repair of the essential 3'-terminal CCA sequence in tRNAs without using a nucleic acid template. Adds these three nucleotides in the order of C, C, and A to the tRNA nucleotide-73, using CTP and ATP as substrates and producing inorganic pyrophosphate. tRNA 3'-terminal CCA addition is required both for tRNA processing and repair. Also involved in tRNA surveillance by mediating tandem CCA addition to generate a CCACCA at the 3' terminus of unstable tRNAs. While stable tRNAs receive only 3'-terminal CCA, unstable tRNAs are marked with CCACCA and rapidly degraded. The chain is CCA-adding enzyme from Thermococcus kodakarensis (strain ATCC BAA-918 / JCM 12380 / KOD1) (Pyrococcus kodakaraensis (strain KOD1)).